The chain runs to 339 residues: Phenylalanine--tRNA ligase alpha subunit (339 aa).

Residue glutamate 247 coordinates Mg(2+).

It belongs to the class-II aminoacyl-tRNA synthetase family. Phe-tRNA synthetase alpha subunit type 1 subfamily. In terms of assembly, tetramer of two alpha and two beta subunits. It depends on Mg(2+) as a cofactor.

The protein resides in the cytoplasm. It carries out the reaction tRNA(Phe) + L-phenylalanine + ATP = L-phenylalanyl-tRNA(Phe) + AMP + diphosphate + H(+). In Deinococcus geothermalis (strain DSM 11300 / CIP 105573 / AG-3a), this protein is Phenylalanine--tRNA ligase alpha subunit.